We begin with the raw amino-acid sequence, 341 residues long: HTH-type sugar sensing transcriptional regulator TrmBL1 (341 aa).

Positions S32 to S53 form a DNA-binding region, H-T-H motif.

The protein belongs to the transcriptional regulator TrmB family. In terms of assembly, homotetramer. Forms homooctamers in the presence of maltotriose or maltose.

Its activity is regulated as follows. Repressor activity is regulated by binding of different sugars to TrmBL1. Binding of maltose and maltotriose results in derepression of the target genes. However, high sugar concentration results in formation of octamers with high affinity for DNA, which may prevent transcription of target genes. Its function is as follows. Global transcriptional repressor of the maltodextrin transport gene cluster (mdxE operon) and most likely of all genes encoding glycolytic enzymes. Acts by binding to the conserved TGM (Thermococcales-Glycolytic-Motif) sequences in their promoter region. Can also interact with non-TGM sequences. In Pyrococcus furiosus (strain ATCC 43587 / DSM 3638 / JCM 8422 / Vc1), this protein is HTH-type sugar sensing transcriptional regulator TrmBL1 (trmBL1).